Consider the following 208-residue polypeptide: uncharacterized protein (208 aa).

This is an uncharacterized protein from Saccharum officinarum (Sugarcane).